A 374-amino-acid chain; its full sequence is MPRPIFALISPTALRHNLSVVRQHLNRAAVAAGGVPPSIWAVIKANAYGHGIERALRAFSEAQGLAMLDIEEAVRCREAGWAGPILLLEGFFTPQDIDLLDRYHISTAVHCQEQLDMLARARPSHRINAMVKLNSGMNRLGFSPQAYGAAFEAAQALMRDGVLGSVGKMTHFATADGPQGPQWQWEVFQAATQGLPGPVSVCNSAATLRYPELAAGPGATHWVRPGICLYGASPFSDTPAAAFGLRPAMTLRAEIIGVQQVSPGQTVGYGATFAASKAMRVGVVSCGYADGYPRHCATGTPVTVNGVATRLLGRVSMDMMMVDLDPVPAAGVGAPVVLWGEGGPDVDAVAAAGGTIGYELLTALAARVPVRDAS.

Catalysis depends on K44, which acts as the Proton acceptor; specific for D-alanine. At K44 the chain carries N6-(pyridoxal phosphate)lysine. Substrate is bound at residue R139. The Proton acceptor; specific for L-alanine role is filled by Y269. M317 lines the substrate pocket.

The protein belongs to the alanine racemase family. Pyridoxal 5'-phosphate is required as a cofactor.

The catalysed reaction is L-alanine = D-alanine. It participates in amino-acid biosynthesis; D-alanine biosynthesis; D-alanine from L-alanine: step 1/1. Functionally, catalyzes the interconversion of L-alanine and D-alanine. May also act on other amino acids. This Bordetella avium (strain 197N) protein is Alanine racemase (alr).